The primary structure comprises 403 residues: Para-nitrophenol 4-monooxygenase (403 aa).

FAD contacts are provided by residues 6-35 (GVVVVGGGPVGLLTALKLGKAGIKVVVLEA) and 279-289 (FRRGRVVLAGD).

It belongs to the PheA/TfdB FAD monooxygenase family. Monomer. Requires FAD as cofactor.

The catalysed reaction is 4-nitrophenol + NADPH + O2 + H(+) = 1,4-benzoquinone + nitrite + NADP(+) + H2O. Its pathway is xenobiotic degradation; 4-nitrophenol degradation. In terms of biological role, involved in the degradation of para-nitrophenol (4-NP). Catalyzes oxidation of 4-nitrophenol (4-NP) at position 4 with concomitant removal of the nitro group as nitrite and production of para-benzoquinone. This Pseudomonas sp. (strain WBC-3) protein is Para-nitrophenol 4-monooxygenase (pnpA).